Consider the following 1138-residue polypeptide: 2'-5'-oligoadenylate synthase 3 (1138 aa).

Position 1 is an N-acetylmethionine (methionine 1). Positions 6–341 (TPAGALDKLV…GVLVQPWEGP (336 aa)) are OAS domain 1. 2 interaction with dsRNA regions span residues 12–56 (DKLV…VIRI) and 185–199 (EPRK…AKLK). Residues 342–462 (GLPRAGILDL…GSRMSPDLSQ (121 aa)) are linker. Positions 370–379 (LAVQSKERSQ) are enriched in basic and acidic residues. Disordered regions lie at residues 370–403 (LAVQ…NPSA) and 434–459 (TQST…MSPD). The segment covering 447 to 459 (SSISTAGSRMSPD) has biased composition (polar residues). 2 OAS domain regions span residues 463–793 (IPSK…PWDV) and 801–1135 (TLAE…WPVK). Residue serine 855 participates in ATP binding. Positions 867, 869, and 939 each coordinate Mg(2+). Positions 998, 1001, and 1020 each coordinate ATP.

Belongs to the 2-5A synthase family. In terms of assembly, monomer. The cofactor is Mg(2+). In terms of tissue distribution, intestine.

Its subcellular location is the cytoplasm. The protein localises to the nucleus. It catalyses the reaction 3 ATP = 5'-triphosphoadenylyl-(2'-&gt;5')-adenylyl-(2'-&gt;5')-adenosine + 2 diphosphate. Its activity is regulated as follows. Produced as a latent enzyme which is activated by dsRNA generated during the course of viral infection. Strongly activated by long dsRNAs at least 50 nucleotides in length. ssRNA does not activate the enzyme. Interferon-induced, dsRNA-activated antiviral enzyme which plays a critical role in cellular innate antiviral response. In addition, it may also play a role in other cellular processes such as apoptosis, cell growth, differentiation and gene regulation. Synthesizes preferentially dimers of 2'-5'-oligoadenylates (2-5A) from ATP which then bind to the inactive monomeric form of ribonuclease L (RNase L) leading to its dimerization and subsequent activation. Activation of RNase L leads to degradation of cellular as well as viral RNA, resulting in the inhibition of protein synthesis, thus terminating viral replication. Can mediate the antiviral effect via the classical RNase L-dependent pathway or an alternative antiviral pathway independent of RNase L. This Mus musculus (Mouse) protein is 2'-5'-oligoadenylate synthase 3 (Oas3).